The following is a 177-amino-acid chain: ATP-dependent protease subunit HslV (177 aa).

Thr6 is an active-site residue. Residues Ser162, Cys165, and Thr168 each coordinate Na(+).

This sequence belongs to the peptidase T1B family. HslV subfamily. As to quaternary structure, a double ring-shaped homohexamer of HslV is capped on each side by a ring-shaped HslU homohexamer. The assembly of the HslU/HslV complex is dependent on binding of ATP.

It localises to the cytoplasm. It carries out the reaction ATP-dependent cleavage of peptide bonds with broad specificity.. Allosterically activated by HslU binding. Protease subunit of a proteasome-like degradation complex believed to be a general protein degrading machinery. This is ATP-dependent protease subunit HslV from Desulforudis audaxviator (strain MP104C).